The sequence spans 495 residues: IQ domain-containing protein IQM5 (495 aa).

The disordered stretch occupies residues 89–122; sequence ENRGGEEEDERGSSPKRRNRGNLTALSLPAPTPF. Positions 131–160 constitute an IQ domain; it reads LDAAAVTLQKVYKSYRTRRNLADCAVVVEE.

Expressed in roots, rosette and cauline leaves, and at lower levels in stems, flowers and siliques.

It is found in the cytoplasm. Its subcellular location is the nucleus. May be involved in biotic and abiotic stress responses. The sequence is that of IQ domain-containing protein IQM5 from Arabidopsis thaliana (Mouse-ear cress).